The primary structure comprises 340 residues: Ketol-acid reductoisomerase (NADP(+)) (340 aa).

One can recognise a KARI N-terminal Rossmann domain in the interval 3 to 182; that stretch reads VQMEYEKDVK…GAARVGLLET (180 aa). NADP(+) is bound by residues 26–29, Arg49, Ser53, and 83–86; these read YGSQ and DEIQ. His108 is an active-site residue. Gly134 serves as a coordination point for NADP(+). In terms of domain architecture, KARI C-terminal knotted spans 183–328; it reads TYKEETEEDL…AELRKAMPFV (146 aa). Mg(2+) is bound by residues Asp191, Glu195, Glu227, and Glu231. Ser252 is a substrate binding site.

The protein belongs to the ketol-acid reductoisomerase family. The cofactor is Mg(2+).

The catalysed reaction is (2R)-2,3-dihydroxy-3-methylbutanoate + NADP(+) = (2S)-2-acetolactate + NADPH + H(+). The enzyme catalyses (2R,3R)-2,3-dihydroxy-3-methylpentanoate + NADP(+) = (S)-2-ethyl-2-hydroxy-3-oxobutanoate + NADPH + H(+). The protein operates within amino-acid biosynthesis; L-isoleucine biosynthesis; L-isoleucine from 2-oxobutanoate: step 2/4. Its pathway is amino-acid biosynthesis; L-valine biosynthesis; L-valine from pyruvate: step 2/4. In terms of biological role, involved in the biosynthesis of branched-chain amino acids (BCAA). Catalyzes an alkyl-migration followed by a ketol-acid reduction of (S)-2-acetolactate (S2AL) to yield (R)-2,3-dihydroxy-isovalerate. In the isomerase reaction, S2AL is rearranged via a Mg-dependent methyl migration to produce 3-hydroxy-3-methyl-2-ketobutyrate (HMKB). In the reductase reaction, this 2-ketoacid undergoes a metal-dependent reduction by NADPH to yield (R)-2,3-dihydroxy-isovalerate. This Streptococcus thermophilus (strain CNRZ 1066) protein is Ketol-acid reductoisomerase (NADP(+)).